Reading from the N-terminus, the 561-residue chain is Excitatory amino acid transporter 4 (561 aa).

The Cytoplasmic portion of the chain corresponds to 1 to 52 (MSSHGNSLFLRESGAGGGCLQGLQDSLQQRALRTRLRLQTMTREHVRRFLRR). Serine 2 is modified (phosphoserine). 3 consecutive transmembrane segments (helical) span residues 53 to 73 (NAFILLTVSAVIIGVSLAFAL), 96 to 116 (MLQMLVLPLIVSSLVTGMASL), and 130 to 150 (VYYMVTTVIAVFIGILMVTII). Asparagine 213, asparagine 229, and asparagine 236 each carry an N-linked (GlcNAc...) asparagine glycan. Transmembrane regions (helical) follow at residues 259–282 (SANGINALGLVVFSVAFGLVIGGM), 292–319 (FFDSLNEAIMRLVGIIIWYAPVGILFLI), and 341–362 (LTVIVGLFLHAGGVLPLIYFLV). Residues 368-398 (FPFIGGMLQALITAMGTSSSSATLPITFRCL) constitute an intramembrane region (discontinuously helical). Residue 385–387 (SSS) participates in L-aspartate binding. A helical membrane pass occupies residues 408 to 434 (ITRFVLPVGATVNMDGTALYEALAAIF). 3 residues coordinate Na(+): glycine 416, threonine 418, and asparagine 420. Residues threonine 424, 465–469 (IPQAG), aspartate 498, and asparagine 505 each bind L-aspartate. Residues 448–481 (ITTISITATAASVGAAGIPQAGLVTMVIVLTSVG) constitute an intramembrane region (discontinuously helical). The chain crosses the membrane as a helical span at residues 495 to 516 (WFLDRLRTMTNVLGDSIGAAVI). 2 residues coordinate Na(+): asparagine 505 and aspartate 509.

Belongs to the dicarboxylate/amino acid:cation symporter (DAACS) (TC 2.A.23) family. SLC1A6 subfamily. As to quaternary structure, homotrimer. In terms of tissue distribution, brain specific.

It localises to the cell membrane. The enzyme catalyses K(+)(in) + L-glutamate(out) + 3 Na(+)(out) + H(+)(out) = K(+)(out) + L-glutamate(in) + 3 Na(+)(in) + H(+)(in). It catalyses the reaction K(+)(in) + L-aspartate(out) + 3 Na(+)(out) + H(+)(out) = K(+)(out) + L-aspartate(in) + 3 Na(+)(in) + H(+)(in). The catalysed reaction is D-aspartate(out) + K(+)(in) + 3 Na(+)(out) + H(+)(out) = D-aspartate(in) + K(+)(out) + 3 Na(+)(in) + H(+)(in). In terms of biological role, sodium-dependent, high-affinity amino acid transporter that mediates the uptake of L-glutamate and also L-aspartate and D-aspartate. Functions as a symporter that transports one amino acid molecule together with two or three Na(+) ions and one proton, in parallel with the counter-transport of one K(+) ion. Mediates Cl(-) flux that is not coupled to amino acid transport; this avoids the accumulation of negative charges due to aspartate and Na(+) symport. Plays a redundant role in the rapid removal of released glutamate from the synaptic cleft, which is essential for terminating the postsynaptic action of glutamate. This Mus musculus (Mouse) protein is Excitatory amino acid transporter 4 (Slc1a6).